The primary structure comprises 507 residues: Prolyl carboxy peptidase like protein 5 (507 aa).

An N-terminal signal peptide occupies residues 1–16 (MNIFISLAILIATTHC). N-linked (GlcNAc...) asparagine glycosylation occurs at asparagine 125. The Charge relay system role is filled by serine 172. 2 N-linked (GlcNAc...) asparagine glycosylation sites follow: asparagine 332 and asparagine 407. Active-site charge relay system residues include aspartate 439 and histidine 466.

The protein belongs to the peptidase S28 family.

This is Prolyl carboxy peptidase like protein 5 from Caenorhabditis elegans.